The primary structure comprises 100 residues: MFAIFQTGGKQYKVQQGEKIYVEKLDLEVGSKISFDQVIMVEGSVGTPFVKNAVVNATVLKQGKQKKINIIKFKSKKHHLKRQGHRQPYTQLVIDSISVK.

It belongs to the bacterial ribosomal protein bL21 family. Part of the 50S ribosomal subunit. Contacts protein L20.

In terms of biological role, this protein binds to 23S rRNA in the presence of protein L20. This chain is Large ribosomal subunit protein bL21, found in Ureaplasma urealyticum serovar 10 (strain ATCC 33699 / Western).